Here is a 174-residue protein sequence, read N- to C-terminus: Ribosome maturation factor RimM (174 aa).

One can recognise a PRC barrel domain in the interval alanine 101 to glutamate 174.

Belongs to the RimM family. As to quaternary structure, binds ribosomal protein uS19.

The protein localises to the cytoplasm. Its function is as follows. An accessory protein needed during the final step in the assembly of 30S ribosomal subunit, possibly for assembly of the head region. Essential for efficient processing of 16S rRNA. May be needed both before and after RbfA during the maturation of 16S rRNA. It has affinity for free ribosomal 30S subunits but not for 70S ribosomes. This Treponema pallidum (strain Nichols) protein is Ribosome maturation factor RimM.